Reading from the N-terminus, the 248-residue chain is Ribosomal RNA small subunit methyltransferase G (248 aa).

S-adenosyl-L-methionine is bound by residues glycine 85, phenylalanine 90, 137–138 (IE), and arginine 156.

It belongs to the methyltransferase superfamily. RNA methyltransferase RsmG family.

Its subcellular location is the cytoplasm. Specifically methylates the N7 position of a guanine in 16S rRNA. The polypeptide is Ribosomal RNA small subunit methyltransferase G (Parasynechococcus marenigrum (strain WH8102)).